Consider the following 572-residue polypeptide: Outer spore wall assembly protein SHE10 (572 aa).

Residues 1–19 form the signal peptide; sequence MRAISKLFVFTVLVLGSLQ. 2 coiled-coil regions span residues 351–372 and 485–510; these read SQAN…REVV and FQER…LREQ. The disordered stretch occupies residues 539–572; sequence STSWSVPPADARAEPASGSPIQQAASEAAQQPSV. Positions 560–572 are enriched in low complexity; it reads QQAASEAAQQPSV.

Belongs to the SHE10 family. As to quaternary structure, component of the mitochondria-localized RNase mitochondrial RNA-processing (RNase MRP) composed of one single RNA encoded by the NME1 gene and at least 31 proteins. Absent in the nucleus-localized RNase MRP (NuMRP).

It is found in the mitochondrion. In terms of biological role, involved in spore wall assembly. May be a component of the mitochondrial RNase MRP (MtMRP), a ribonucleoprotein endoribonuclease involved in the cleaving RNA transcripts to generate primers for DNA replication in mitochondria. The polypeptide is Outer spore wall assembly protein SHE10 (Eremothecium gossypii (strain ATCC 10895 / CBS 109.51 / FGSC 9923 / NRRL Y-1056) (Yeast)).